The chain runs to 941 residues: Bifunctional glutamine synthetase adenylyltransferase/adenylyl-removing enzyme (941 aa).

Residues 1 to 437 (MPMPTVSMSP…AAEFAELLAP (437 aa)) form an adenylyl removase region. The adenylyl transferase stretch occupies residues 444-941 (PDALADYWRA…FPLGKDETAL (498 aa)).

It belongs to the GlnE family. It depends on Mg(2+) as a cofactor.

The enzyme catalyses [glutamine synthetase]-O(4)-(5'-adenylyl)-L-tyrosine + phosphate = [glutamine synthetase]-L-tyrosine + ADP. The catalysed reaction is [glutamine synthetase]-L-tyrosine + ATP = [glutamine synthetase]-O(4)-(5'-adenylyl)-L-tyrosine + diphosphate. Its function is as follows. Involved in the regulation of glutamine synthetase GlnA, a key enzyme in the process to assimilate ammonia. When cellular nitrogen levels are high, the C-terminal adenylyl transferase (AT) inactivates GlnA by covalent transfer of an adenylyl group from ATP to specific tyrosine residue of GlnA, thus reducing its activity. Conversely, when nitrogen levels are low, the N-terminal adenylyl removase (AR) activates GlnA by removing the adenylyl group by phosphorolysis, increasing its activity. The regulatory region of GlnE binds the signal transduction protein PII (GlnB) which indicates the nitrogen status of the cell. This Xanthomonas axonopodis pv. citri (strain 306) protein is Bifunctional glutamine synthetase adenylyltransferase/adenylyl-removing enzyme.